Here is a 309-residue protein sequence, read N- to C-terminus: Oxygen-dependent coproporphyrinogen-III oxidase (309 aa).

Ser-94 is a substrate binding site. Positions 98 and 108 each coordinate a divalent metal cation. The active-site Proton donor is the His-108. 110–112 (NVR) provides a ligand contact to substrate. A divalent metal cation is bound by residues His-147 and His-177. Residues 242-277 (YVEFNLVWDRGTLFGLQTGGRTESILMSLPPLVRWE) form an important for dimerization region. 260–262 (GGR) contacts substrate.

It belongs to the aerobic coproporphyrinogen-III oxidase family. In terms of assembly, homodimer. It depends on a divalent metal cation as a cofactor.

It is found in the cytoplasm. It carries out the reaction coproporphyrinogen III + O2 + 2 H(+) = protoporphyrinogen IX + 2 CO2 + 2 H2O. It participates in porphyrin-containing compound metabolism; protoporphyrin-IX biosynthesis; protoporphyrinogen-IX from coproporphyrinogen-III (O2 route): step 1/1. Involved in the heme biosynthesis. Catalyzes the aerobic oxidative decarboxylation of propionate groups of rings A and B of coproporphyrinogen-III to yield the vinyl groups in protoporphyrinogen-IX. This is Oxygen-dependent coproporphyrinogen-III oxidase from Yersinia pseudotuberculosis serotype O:1b (strain IP 31758).